The chain runs to 185 residues: Urease accessory protein UreE (185 aa).

The interval 153–185 is disordered; sequence LRANSAQGHGHSHSHSHDHHGYHHHGDGHWHKH. A compositionally biased stretch (basic residues) spans 162–175; that stretch reads GHSHSHSHDHHGYH. Over residues 176–185 the composition is skewed to basic and acidic residues; the sequence is HHGDGHWHKH.

Belongs to the UreE family.

Its subcellular location is the cytoplasm. In terms of biological role, involved in urease metallocenter assembly. Binds nickel. Probably functions as a nickel donor during metallocenter assembly. The sequence is that of Urease accessory protein UreE from Haemophilus influenzae (strain 86-028NP).